The following is a 173-amino-acid chain: Alpha-crystallin A chain (173 aa).

Met1 is subject to N-acetylmethionine. The segment at Met1–Glu63 is required for complex formation with BFSP1 and BFSP2. Gln6 is modified (deamidated glutamine; partial). Residue Ser45 is modified to Phosphoserine. Gln50 carries the post-translational modification Deamidated glutamine; partial. Positions Leu52 to Ser162 constitute a sHSP domain. Lys70 and Lys99 each carry N6-acetyllysine. His100 serves as a coordination point for Zn(2+). At Asn101 the chain carries Deamidated asparagine; partial. Residues Glu102 and His107 each coordinate Zn(2+). Ser122 carries the post-translational modification Phosphoserine. Asn123 is subject to Deamidated asparagine; partial. Residues Pro144 to Ser173 form a disordered region. Positions Gly153–Pro167 are enriched in basic and acidic residues. His154 lines the Zn(2+) pocket. Ser162 carries an O-linked (GlcNAc) serine glycan.

The protein belongs to the small heat shock protein (HSP20) family. Heteromer composed of three CRYAA and one CRYAB subunits. Inter-subunit bridging via zinc ions enhances stability, which is crucial as there is no protein turn over in the lens. Can also form homodimers and homotetramers (dimers of dimers) which serve as the building blocks of homooligomers. Within homooligomers, the zinc-binding motif is created from residues of 3 different molecules. His-100 and Glu-102 from one molecule are ligands of the zinc ion, and His-107 and His-154 residues from additional molecules complete the site with tetrahedral coordination geometry. Part of a complex required for lens intermediate filament formation composed of BFSP1, BFSP2 and CRYAA. Post-translationally, acetylation at Lys-70 may increase chaperone activity. In terms of processing, undergoes age-dependent proteolytical cleavage at the C-terminus.

The protein localises to the cytoplasm. It localises to the nucleus. Contributes to the transparency and refractive index of the lens. Acts as a chaperone, preventing aggregation of various proteins under a wide range of stress conditions. Required for the correct formation of lens intermediate filaments as part of a complex composed of BFSP1, BFSP2 and CRYAA. In Melursus ursinus (Sloth bear), this protein is Alpha-crystallin A chain (CRYAA).